The chain runs to 236 residues: T-cell surface glycoprotein CD8 alpha chain (236 aa).

Residues 1 to 26 (MASRVICFLSLNLLLLDVITRLQVSG) form the signal peptide. In terms of domain architecture, Ig-like V-type spans 27-130 (QLQLSPKKVD…ITSNSVMYFS (104 aa)). At 27–189 (QLQLSPKKVD…MGLGFACDIY (163 aa)) the chain is on the extracellular side. The cysteines at positions 47 and 119 are disulfide-linked. A glycan (N-linked (GlcNAc...) asparagine) is linked at N63. An O-linked (GalNAc...) threonine; partial glycan is attached at T144. 4 O-linked (GalNAc...) threonine glycosylation sites follow: T148, T152, T158, and T160. The disordered stretch occupies residues 150–170 (APTPVPPPTGTPRPLRPEACR). A helical membrane pass occupies residues 190–210 (IWAPLAGICAVLLLSLVITLI). C211 carries S-palmitoyl cysteine lipidation. The Cytoplasmic segment spans residues 211-236 (CCHRNRRRVCKCPRPLVKPRPSEKFV).

As to quaternary structure, forms disulfide-linked heterodimers with CD8B at the cell surface. Also forms homodimers in several cell types including NK-cells or peripheral blood T-lymphocytes. Interacts with the MHC class I HLA-A/B2M dimer. Interacts with LCK in a zinc-dependent manner. Post-translationally, palmitoylated, but association with CD8B seems to be more important for the enrichment of CD8A in lipid rafts. O-glycosylated. In terms of processing, phosphorylated in cytotoxic T-lymphocytes (CTLs) following activation.

It localises to the cell membrane. Integral membrane glycoprotein that plays an essential role in the immune response and serves multiple functions in responses against both external and internal offenses. In T-cells, functions primarily as a coreceptor for MHC class I molecule:peptide complex. The antigens presented by class I peptides are derived from cytosolic proteins while class II derived from extracellular proteins. Interacts simultaneously with the T-cell receptor (TCR) and the MHC class I proteins presented by antigen presenting cells (APCs). In turn, recruits the Src kinase LCK to the vicinity of the TCR-CD3 complex. LCK then initiates different intracellular signaling pathways by phosphorylating various substrates ultimately leading to lymphokine production, motility, adhesion and activation of cytotoxic T-lymphocytes (CTLs). This mechanism enables CTLs to recognize and eliminate infected cells and tumor cells. In NK-cells, the presence of CD8A homodimers at the cell surface provides a survival mechanism allowing conjugation and lysis of multiple target cells. CD8A homodimer molecules also promote the survival and differentiation of activated lymphocytes into memory CD8 T-cells. The sequence is that of T-cell surface glycoprotein CD8 alpha chain (Cd8a) from Rattus norvegicus (Rat).